Consider the following 484-residue polypeptide: UDP-N-acetylmuramate--L-alanine ligase (484 aa).

Position 123–129 (123–129 (GTHGKTT)) interacts with ATP.

This sequence belongs to the MurCDEF family.

It localises to the cytoplasm. It carries out the reaction UDP-N-acetyl-alpha-D-muramate + L-alanine + ATP = UDP-N-acetyl-alpha-D-muramoyl-L-alanine + ADP + phosphate + H(+). Its pathway is cell wall biogenesis; peptidoglycan biosynthesis. Its function is as follows. Cell wall formation. This chain is UDP-N-acetylmuramate--L-alanine ligase, found in Pseudomonas fluorescens (strain ATCC BAA-477 / NRRL B-23932 / Pf-5).